A 400-amino-acid polypeptide reads, in one-letter code: Argininosuccinate synthase (400 aa).

ATP-binding positions include Ala-10–Ser-18 and Ala-38. Position 89 (Tyr-89) interacts with L-citrulline. Gly-119 is an ATP binding site. Residues Thr-121, Asn-125, and Asp-126 each coordinate L-aspartate. Residue Asn-125 coordinates L-citrulline. L-citrulline contacts are provided by Arg-129, Ser-177, Ser-186, Glu-262, and Tyr-274.

This sequence belongs to the argininosuccinate synthase family. Type 1 subfamily. In terms of assembly, homotetramer.

Its subcellular location is the cytoplasm. It catalyses the reaction L-citrulline + L-aspartate + ATP = 2-(N(omega)-L-arginino)succinate + AMP + diphosphate + H(+). It participates in amino-acid biosynthesis; L-arginine biosynthesis; L-arginine from L-ornithine and carbamoyl phosphate: step 2/3. This Trichormus variabilis (strain ATCC 29413 / PCC 7937) (Anabaena variabilis) protein is Argininosuccinate synthase.